A 1322-amino-acid chain; its full sequence is Phosphoribosylformylglycinamidine synthase (1322 aa).

ATP contacts are provided by residues 300–311 (GASTGAGGEIRD) and alanine 702. The Mg(2+) site is built by aspartate 703, glutamate 742, asparagine 746, and aspartate 915. Serine 917 contributes to the ATP binding site. The Glutamine amidotransferase type-1 domain occupies 1073-1322 (VAILREQGIN…LFRNARAWVG (250 aa)). Catalysis depends on cysteine 1166, which acts as the Nucleophile. Residues histidine 1287 and glutamate 1289 contribute to the active site.

This sequence in the N-terminal section; belongs to the FGAMS family. As to quaternary structure, monomer.

The protein resides in the cytoplasm. The catalysed reaction is N(2)-formyl-N(1)-(5-phospho-beta-D-ribosyl)glycinamide + L-glutamine + ATP + H2O = 2-formamido-N(1)-(5-O-phospho-beta-D-ribosyl)acetamidine + L-glutamate + ADP + phosphate + H(+). It functions in the pathway purine metabolism; IMP biosynthesis via de novo pathway; 5-amino-1-(5-phospho-D-ribosyl)imidazole from N(2)-formyl-N(1)-(5-phospho-D-ribosyl)glycinamide: step 1/2. Functionally, phosphoribosylformylglycinamidine synthase involved in the purines biosynthetic pathway. Catalyzes the ATP-dependent conversion of formylglycinamide ribonucleotide (FGAR) and glutamine to yield formylglycinamidine ribonucleotide (FGAM) and glutamate. The sequence is that of Phosphoribosylformylglycinamidine synthase from Xylella fastidiosa (strain Temecula1 / ATCC 700964).